We begin with the raw amino-acid sequence, 476 residues long: Aspartyl/glutamyl-tRNA(Asn/Gln) amidotransferase subunit B (476 aa).

The protein belongs to the GatB/GatE family. GatB subfamily. In terms of assembly, heterotrimer of A, B and C subunits.

It catalyses the reaction L-glutamyl-tRNA(Gln) + L-glutamine + ATP + H2O = L-glutaminyl-tRNA(Gln) + L-glutamate + ADP + phosphate + H(+). It carries out the reaction L-aspartyl-tRNA(Asn) + L-glutamine + ATP + H2O = L-asparaginyl-tRNA(Asn) + L-glutamate + ADP + phosphate + 2 H(+). In terms of biological role, allows the formation of correctly charged Asn-tRNA(Asn) or Gln-tRNA(Gln) through the transamidation of misacylated Asp-tRNA(Asn) or Glu-tRNA(Gln) in organisms which lack either or both of asparaginyl-tRNA or glutaminyl-tRNA synthetases. The reaction takes place in the presence of glutamine and ATP through an activated phospho-Asp-tRNA(Asn) or phospho-Glu-tRNA(Gln). The sequence is that of Aspartyl/glutamyl-tRNA(Asn/Gln) amidotransferase subunit B from Geobacillus thermodenitrificans (strain NG80-2).